Consider the following 111-residue polypeptide: Magnetosome protein MamF (111 aa).

Residues 1-17 lie on the Cytoplasmic side of the membrane; that stretch reads MAETILIETKTAGGNCR. A helical transmembrane segment spans residues 18 to 38; sequence SYLMAGASYLGILCFVPLLMS. The Lumenal segment spans residues 39 to 50; sequence RDDEYVYFHAKQ. A helical membrane pass occupies residues 51–71; the sequence is GLVLWMWSILAMFALHLPGIG. Position 72 (Lys-72) is a topological domain, cytoplasmic. Residues 73-93 form a helical membrane-spanning segment; that stretch reads WLFGFSSMGVLMLSVVGLVSV. Residues 94–111 are Lumenal-facing; sequence ALRRTWRLPLISHVVALI.

It belongs to the magnetosome MamF/MmsF protein family. In terms of assembly, may form homooligomers. Post-translationally, subject to cleavage or degradation; identified by N-terminal sequencing of proteins that are about 103, 92 and 15 kDa in size.

It is found in the magnetosome membrane. Functionally, plays a role in regulating magnetite crystal size; partially redundant function with MmsF. This Magnetospirillum gryphiswaldense (strain DSM 6361 / JCM 21280 / NBRC 15271 / MSR-1) protein is Magnetosome protein MamF.